A 1127-amino-acid chain; its full sequence is MARFVPSPPPNCLSYKSEGRLGEQDWQAHFKVPCCGVDPSQLESEEAEVDVRERDTQRDREPKRARDLTLRDSCTDNSMQFGTRTTAAEPGFMGTWQNADTNLLFRMSQQVPLACAGRVLGADFCPNLEEPDQRLEVQAIRCTLVNCTCECFQPGKINLRTCDQCKHGWVAHALDKLSTQHLYHPTQVEIVQSNVVFDISSLMLYGTQAVPVRLKILLDRLFSVLKQEEVLHILHGLGWTLRDYVRGYILQDAAGKVLDRWAIMSREEEIITLQQFLRFGETKSIVELMAIQEKEGQAVAVPSSKTDSDIRTFIESNNRTRSPSLLAHLENSNPSSIHHFENIPNSLAFLLPFQYINPVSAPLLGLPPNGLLLEQPGLRLREPSISTQNEYNESSESEVSPTPYKSDQTPNRNALTSITNVEPKTEPACVSPIQNSAPVSDLSKTEHPKSSFRIHRMRRMGSASRKGRVFCNACGKTFYDKGTLKIHYNAVHLKIKHRCTIEGCNMVFSSLRSRNRHSANPNPRLHMPMLRNNRDKDLIRATSGAATPVIASTKSNLTLTSPGRPPMGFTTPPLDPVLQNPLPSQLVFSGLKTVQPVPPFYRSLLTPGEMVSPPTSLPTSPIIPTSGTIEQHPPPPSEPIVPAVMMGTHEPSADLAPKKKPRKSSMPVKIEKEIIDTADEFDDEDDDPNDGGTVVNDMSHDNHCHSQDEMSPGMSVKDFSKHNRTRCISRTEIRRADSMTSEDQEPERDYENESESSEPKLGEESMEGDEHLHSEVSEKVLMNSERPDENHSEPSHQDVIKVKEEFTDPTYDMFYMSQYGLYNGGGASMAALHESFTSSLNYGSPQKFSPEGDLCSSPDPKICYVCKKSFKSSYSVKLHYRNVHLKEMHVCTVAGCNAAFPSRRSRDRHSANINLHRKLLTKELDDMSLDSSQPSLSKDLRDEFLMKIYGAQHPLGLDGREDASSPAGTEDSHLNGYGRGMAEDYMVLDLSTTSSLQSSSSVHSSRESDAGSDEGILLDDIDGASDSGESTHKAEAPTLPGSLGAEVSGSLMFSSLSGSNGGIMCNICHKMYSNKGTLRVHYKTVHLREMHKCKVPGCNMMFSSVRSRNRHSQNPNLHKNIPFTSID.

The interval 44–67 (SEEAEVDVRERDTQRDREPKRARD) is disordered. Basic and acidic residues predominate over residues 49-67 (VDVRERDTQRDREPKRARD). A Glycyl lysine isopeptide (Lys-Gly) (interchain with G-Cter in SUMO2) cross-link involves residue K305. Residues 386 to 450 (STQNEYNESS…DLSKTEHPKS (65 aa)) form a disordered region. Positions 389-400 (NEYNESSESEVS) are enriched in low complexity. A compositionally biased stretch (polar residues) spans 403–422 (PYKSDQTPNRNALTSITNVE). Glycyl lysine isopeptide (Lys-Gly) (interchain with G-Cter in SUMO2) cross-links involve residues K424, K444, and K449. The segment at 469–492 (VFCNACGKTFYDKGTLKIHYNAVH) adopts a C2H2-type 1 zinc-finger fold. Residue S589 is modified to Phosphoserine. K669 participates in a covalent cross-link: Glycyl lysine isopeptide (Lys-Gly) (interchain with G-Cter in SUMO2). A disordered region spans residues 675–772 (IDTADEFDDE…EESMEGDEHL (98 aa)). Over residues 676–689 (DTADEFDDEDDDPN) the composition is skewed to acidic residues. 2 stretches are compositionally biased toward basic and acidic residues: residues 698 to 708 (MSHDNHCHSQD) and 747 to 772 (ERDY…DEHL). The C2H2-type 2 zinc-finger motif lies at 861–884 (KICYVCKKSFKSSYSVKLHYRNVH). Residues K922 and K947 each participate in a glycyl lysine isopeptide (Lys-Gly) (interchain with G-Cter in SUMO2) cross-link. Disordered stretches follow at residues 955 to 976 (LGLD…HLNG) and 996 to 1041 (LQSS…TLPG). Positions 1010–1023 (AGSDEGILLDDIDG) are enriched in acidic residues. 2 C2H2-type zinc fingers span residues 1063-1086 (IMCN…KTVH) and 1091-1118 (HKCK…PNLH). Residues 1107–1127 (SRNRHSQNPNLHKNIPFTSID) are disordered.

Highly expressed in ovary, testis and kidney. Expressed at moderate levels in skin and small intestine, and at lower levels in lung. Trace amounts of expression detected in liver and colon. Not detected in brain, spleen or thymus.

The protein localises to the nucleus. Functionally, probable transcription factor specific for skin keratinocytes. May play a role in the differentiation of spermatozoa and oocytes. May also play an important role in early urinary-tract development. The polypeptide is Zinc finger protein basonuclin-2 (Mus musculus (Mouse)).